Here is a 156-residue protein sequence, read N- to C-terminus: SsrA-binding protein (156 aa).

The disordered stretch occupies residues 130-156; sequence KFDKRDDLKKKDAKRDIDRALRDKQKY. Residues 132–156 show a composition bias toward basic and acidic residues; it reads DKRDDLKKKDAKRDIDRALRDKQKY.

It belongs to the SmpB family.

Its subcellular location is the cytoplasm. Required for rescue of stalled ribosomes mediated by trans-translation. Binds to transfer-messenger RNA (tmRNA), required for stable association of tmRNA with ribosomes. tmRNA and SmpB together mimic tRNA shape, replacing the anticodon stem-loop with SmpB. tmRNA is encoded by the ssrA gene; the 2 termini fold to resemble tRNA(Ala) and it encodes a 'tag peptide', a short internal open reading frame. During trans-translation Ala-aminoacylated tmRNA acts like a tRNA, entering the A-site of stalled ribosomes, displacing the stalled mRNA. The ribosome then switches to translate the ORF on the tmRNA; the nascent peptide is terminated with the 'tag peptide' encoded by the tmRNA and targeted for degradation. The ribosome is freed to recommence translation, which seems to be the essential function of trans-translation. This Exiguobacterium sibiricum (strain DSM 17290 / CCUG 55495 / CIP 109462 / JCM 13490 / 255-15) protein is SsrA-binding protein.